A 1183-amino-acid polypeptide reads, in one-letter code: DNA-directed RNA polymerase subunit beta (1183 aa).

Belongs to the RNA polymerase beta chain family. As to quaternary structure, the RNAP catalytic core consists of 2 alpha, 1 beta, 1 beta' and 1 omega subunit. When a sigma factor is associated with the core the holoenzyme is formed, which can initiate transcription.

The catalysed reaction is RNA(n) + a ribonucleoside 5'-triphosphate = RNA(n+1) + diphosphate. In terms of biological role, DNA-dependent RNA polymerase catalyzes the transcription of DNA into RNA using the four ribonucleoside triphosphates as substrates. This Staphylococcus aureus (strain COL) protein is DNA-directed RNA polymerase subunit beta.